A 245-amino-acid polypeptide reads, in one-letter code: Balbiani ring A 28 kDa protein (245 aa).

The signal sequence occupies residues 1–16; the sequence is MKSIIKHILFVVLLIS. Phosphoserine occurs at positions 33, 40, 92, 93, and 115.

As to expression, salivary gland.

It is found in the secreted. Functionally, used by the larvae to construct a supramolecular structure, the larval tube. This chain is Balbiani ring A 28 kDa protein, found in Chironomus thummi thummi (Midge).